Reading from the N-terminus, the 103-residue chain is Small ribosomal subunit protein uS10 (103 aa).

Belongs to the universal ribosomal protein uS10 family. In terms of assembly, part of the 30S ribosomal subunit.

In terms of biological role, involved in the binding of tRNA to the ribosomes. This Actinobacillus pleuropneumoniae serotype 5b (strain L20) protein is Small ribosomal subunit protein uS10.